A 185-amino-acid chain; its full sequence is Ribosome-recycling factor (185 aa).

Belongs to the RRF family.

Its subcellular location is the cytoplasm. Responsible for the release of ribosomes from messenger RNA at the termination of protein biosynthesis. May increase the efficiency of translation by recycling ribosomes from one round of translation to another. The polypeptide is Ribosome-recycling factor (Azoarcus sp. (strain BH72)).